The following is a 232-amino-acid chain: Enolase-phosphatase E1 (232 aa).

The protein belongs to the HAD-like hydrolase superfamily. MasA/MtnC family. In terms of assembly, monomer. Mg(2+) is required as a cofactor.

The catalysed reaction is 5-methylsulfanyl-2,3-dioxopentyl phosphate + H2O = 1,2-dihydroxy-5-(methylsulfanyl)pent-1-en-3-one + phosphate. It functions in the pathway amino-acid biosynthesis; L-methionine biosynthesis via salvage pathway; L-methionine from S-methyl-5-thio-alpha-D-ribose 1-phosphate: step 3/6. Its pathway is amino-acid biosynthesis; L-methionine biosynthesis via salvage pathway; L-methionine from S-methyl-5-thio-alpha-D-ribose 1-phosphate: step 4/6. Functionally, bifunctional enzyme that catalyzes the enolization of 2,3-diketo-5-methylthiopentyl-1-phosphate (DK-MTP-1-P) into the intermediate 2-hydroxy-3-keto-5-methylthiopentenyl-1-phosphate (HK-MTPenyl-1-P), which is then dephosphorylated to form the acireductone 1,2-dihydroxy-3-keto-5-methylthiopentene (DHK-MTPene). The protein is Enolase-phosphatase E1 of Sorangium cellulosum (strain So ce56) (Polyangium cellulosum (strain So ce56)).